A 2512-amino-acid polypeptide reads, in one-letter code: MSTHSTVETLDVNRVRELLRSHREASSHCDEPRFTATHTKGRVVASSEKPPVSFTIANGQIVSDSEVITSTEAKAAAILSVISSYPKEIREQLNGRIERGFTDNPDVDEAARCIHSARLHNITTTALRKKPLLVHENVSNDMERFLNEKFLGYKIRLTFSKNVAHNNAAALRRVLRFYMRDKVGYRKDDDIPDGYHVKNKDVGASGMDVIADELTDVHCCTPDLDFRDHIRLERLKKYIYSHVCPTSKDHGIICEGFREGSTKYRCENIGQQCYIEAPTLTFVHSAYDITAAGIVDCMIAANAHHAIMCLHFPSAILSGSTSGKDDLLQYKWDIVVEDGIKYYKQKFLNDTQASYVHRLDVYLDKFLTKVVLGSDKRFYMFEITEMFGSVAIIEVFRREKDFIAGSKLTFNIPRTEHPNTVTIHTWEYVTGYESLFKGRNGLKSGVMRPVSIEVPEEFFLSVFKYGMTVDSNKFVYDGLLKSGVGIAARRNIGGTTMVDPSFPIPVRKLQTFIVTMYMLLYQEKWEATQGLVTMKMLADQYRTRSSKNGIVRFLTNVFSPDKVGETQHPSSTYDLGKLGFSHSEDNKFVCDRNLNTEERSRLSQFERLVQWFREFSRVHRKCPIVVHDSTHMLEYVLDIPDMVVQNIKSLRDDLTLSNLCDHDFDAYLPSHIEVNDAKCTKDLTVIQVPGDGNCLYYCFVKACLYRGISVCDLKSRLRDSPYFLEVAKLARDAGEDEFLDSLERDGVYGNKFTLILISKTFNVNICVHLKGGRELITHFISNKGSRFIHLQLEHSHYSLLVPCIKAGLIDEHVLCHGALSMVVPTTHDYRRLVDLYKIYTRDGTIASYFNIFNNSYKGPFLNVYELGFMEIASSLEIPSSSGNKFLITDVWLHHCIKALRVLDPHSNVIVLRSSNTSRIPDRYGVCDFTMDSEFHEESFCLSTTLSDVLNLGIYSQCMVVFSDLSRVPLKPFAPGFRTRTSVAERSNKILLAWSALSSGGTAVFRVFRPEEVPESLNMLTTLFEDIRFFKPKAISTSIVDGYLLCSGKRSHPGSEFSITSEVRNHFYTVNVENFYKQTLEESEVSNYVKDLCGLYAGGGFVKPTRKHSYNRSFVLDRSLILSKLMEFSSSVSFGLFGRKFSTYKLHVGCDTKLKFCNRSIEEILDSQCLHCKYSKYDFNSLRSVSDLASFATRERAVVVETFDDCGDYVSIISFFHKLYSMCFKDLRVVSDCFLNNVVLKSFLAYARCYSDVEISLCQLKGRLLVDITCRSSWYNGCEFGDFELVSCNRHDYDTAFVEVLIQHAMHNQRYNNETIVINSRADAIRAGLSVRKFKPCGDVLDDLNKSVKYKPKFVTYNTESLVNSIKAIVGVGDETTKEPTDNSVVEKPVVVFEKVDSPNLDDRIKAVYEYRSYMGRELSHSNDVLEKTVSNLLRFTETRDPKRLNEMYFPNSSFLSDEMKLKDSVGIITCNGKILKNSEPIVQFDDISAVYDIVNGSVVDKSDYFKMHRGKTTKQVGGFAIYTSLVAHNQVESILKAVDCVYASEKINDLSAISIDWVQAVAGAGKTTLLVETFLITDLVVCPTVENRDSIRLRIKRRYPDLDPKEVDCRVRTINGYLVDFSTKLAKVTLNENTRLLVDEAIMYHAGCLFVLCMIYNIRRMFCVGDKKQIPFVSRIDFKLNYEKLCDFVNTEARPLARTFRSPPDVTYRMQQIYGKSLKGLTIQCLSKNQDTSPSVSKLVITKNYRFGQNFIREVFEKDKIDFDGKNLRILFFLREDMLSFYGNGGMIFTDCCSTIHQFQGSDAEYVVVMRLTYAEKSIFMDERQCLVALTRHTKRMVYVSVNEGTDVLTRWINMPVVESMLVPHLSLSGGGTTTPSRYVTYRSIPSVDLMKGDKCVRVGYHPRSDIILDKRDTLTAVLNKIADARPKGNLVVSSAVLDKFNQQRLKPLLKSIVGHSNIFCAGVNSNINSTVFEVMQLNAVDHVPNHFIDPIFDDDVVRSADIGYKPYRQHDNHDPVLSDYGFDDKFAVIQNFLCTTFPNSCYVPNYMDAWITYNLDLDLAIDDIVINVIKFATIDRTYDCMIPRLSFCSPVVRKACLVESLIAVQKRNRNVPQLSSEVSPYVMADQLFDSLRSLLDERYYQEVHYGPAELAAWLNDQKGSVVDEVIGEYCIYSTAVERYQLITKNSPKPTLSDEAYMEFAAPQVVLHQTKDINAVFCVIWRGIKTVVQSMLRHHNNIFMFADMDPDSFADLLTEKVSTKVQETFDSLEIDIKKYDKSQDLKVLLLECKLLRYFGVSEELVIIWFKSHVESIVKDRRSGLKFKVQVQRRSGDGGTFIGNTLFLIALCARNFDLRKLKLAVFSGDDSLLVGEKRDLQCDSQNFSDLFNLDVKFFPNFKYYHFCSKFLIAVEDRWYFIPDPVKLCIRLARLDLVNWGHIEEYRISLKDTTKYYCDDSIVRELSKAVCDRYPVAVDPAEVFRVVCSIVSSKDEFRLLFEEPLACLPEGNLLPVIN.

The 212-residue stretch at 156–367 (RLTFSKNVAH…RLDVYLDKFL (212 aa)) folds into the Alphavirus-like MT domain. Positions 683 to 803 (LTVIQVPGDG…HSHYSLLVPC (121 aa)) constitute an OTU domain. Residues 1520–1696 (AIYTSLVAHN…DFVNTEARPL (177 aa)) form the (+)RNA virus helicase ATP-binding domain. One can recognise a (+)RNA virus helicase C-terminal domain in the interval 1697-1874 (ARTFRSPPDV…HLSLSGGGTT (178 aa)). The 114-residue stretch at 2265-2378 (FDSLEIDIKK…VGEKRDLQCD (114 aa)) folds into the RdRp catalytic domain.

It catalyses the reaction ATP + H2O = ADP + phosphate + H(+). The enzyme catalyses RNA(n) + a ribonucleoside 5'-triphosphate = RNA(n+1) + diphosphate. RNA replication. The central part of this protein possibly functions as an ATP-binding helicase (Potential). This Citrus leprosis virus C (isolate Citrus sinesis/Brazil/Cordeiropolis/2003) (CiLV-C) protein is RNA replication protein.